A 372-amino-acid polypeptide reads, in one-letter code: tRNA-specific 2-thiouridylase MnmA (372 aa).

Residues 16–23 (GMSGGVDS) and Met-42 each bind ATP. The interval 102 to 104 (NPD) is interaction with target base in tRNA. The Nucleophile role is filled by Cys-107. Cysteines 107 and 205 form a disulfide. Gly-132 is a binding site for ATP. The interaction with tRNA stretch occupies residues 155-157 (KDQ). Residue Cys-205 is the Cysteine persulfide intermediate of the active site. An interaction with tRNA region spans residues 317–318 (RY).

This sequence belongs to the MnmA/TRMU family.

Its subcellular location is the cytoplasm. The enzyme catalyses S-sulfanyl-L-cysteinyl-[protein] + uridine(34) in tRNA + AH2 + ATP = 2-thiouridine(34) in tRNA + L-cysteinyl-[protein] + A + AMP + diphosphate + H(+). Functionally, catalyzes the 2-thiolation of uridine at the wobble position (U34) of tRNA, leading to the formation of s(2)U34. This chain is tRNA-specific 2-thiouridylase MnmA, found in Shewanella sp. (strain MR-7).